The following is a 474-amino-acid chain: 3-isopropylmalate dehydratase large subunit (474 aa).

3 residues coordinate [4Fe-4S] cluster: C353, C414, and C417.

The protein belongs to the aconitase/IPM isomerase family. LeuC type 1 subfamily. In terms of assembly, heterodimer of LeuC and LeuD. The cofactor is [4Fe-4S] cluster.

It carries out the reaction (2R,3S)-3-isopropylmalate = (2S)-2-isopropylmalate. The protein operates within amino-acid biosynthesis; L-leucine biosynthesis; L-leucine from 3-methyl-2-oxobutanoate: step 2/4. Functionally, catalyzes the isomerization between 2-isopropylmalate and 3-isopropylmalate, via the formation of 2-isopropylmaleate. This Xylella fastidiosa (strain M12) protein is 3-isopropylmalate dehydratase large subunit.